The following is a 187-amino-acid chain: Cell division protein SepF (187 aa).

The interval 13–74 is disordered; sequence GLAEDDRYAE…PAPATTAQVT (62 aa). The segment covering 16–65 has biased composition (basic and acidic residues); that stretch reads EDDRYAEDTEPETTRPRVEAAREVRVESRHEARPEVRHEPRPEVSVERRP.

The protein belongs to the SepF family. In terms of assembly, homodimer. Interacts with FtsZ.

The protein resides in the cytoplasm. In terms of biological role, cell division protein that is part of the divisome complex and is recruited early to the Z-ring. Probably stimulates Z-ring formation, perhaps through the cross-linking of FtsZ protofilaments. Its function overlaps with FtsA. In Kineococcus radiotolerans (strain ATCC BAA-149 / DSM 14245 / SRS30216), this protein is Cell division protein SepF.